The chain runs to 153 residues: uncharacterized protein (153 aa).

The signal sequence occupies residues 1-22 (MKLLKKGTTVLFVMIMAVMLVA). Residue C23 is the site of N-palmitoyl cysteine attachment. C23 carries the S-diacylglycerol cysteine lipid modification. The tract at residues 121–153 (LPGMASTGDVSKGISMKESEKMLKSQGFKEVEK) is disordered. A compositionally biased stretch (basic and acidic residues) spans 135–153 (SMKESEKMLKSQGFKEVEK).

It to E.coli YehR.

It is found in the cell membrane. This is an uncharacterized protein from Listeria innocua serovar 6a (strain ATCC BAA-680 / CLIP 11262).